Consider the following 424-residue polypeptide: Mitogen-activated protein kinase mpkA (424 aa).

Residues 23–314 (YNVTKELGQG…VEEALEHPYL (292 aa)) form the Protein kinase domain. Residues 29-37 (LGQGAYGIV) and Lys52 contribute to the ATP site. The segment at 375 to 424 (QQIAQQTNVPIPDHQQGGWKQEEPKPQEVHAAGGHVNDLESSLQRGMDVQ) is disordered.

The protein belongs to the protein kinase superfamily. Ser/Thr protein kinase family. As to quaternary structure, interacts with flbB, flbC, brlA, and rasB. Interacts with fmqA and fmqC. Interacts with hsp90. It depends on Mg(2+) as a cofactor. In terms of processing, phosphorylated by the upstreamm MAPKK mkk2. Phosphorylation is induced during asexual development. Phosphorylation is regulated by rlmA.

The enzyme catalyses L-seryl-[protein] + ATP = O-phospho-L-seryl-[protein] + ADP + H(+). It catalyses the reaction L-threonyl-[protein] + ATP = O-phospho-L-threonyl-[protein] + ADP + H(+). With respect to regulation, activated by threonine and tyrosine phosphorylation by the upstreamm MAPKK mkk2. In terms of biological role, mitogen-activated protein kinase; part of cell wall integrity (CWI) signaling pathway composed of pkcA, the bck1-mkk2-mpka MAPK cascade and the downstream rlmA transcription regulator. The CWI signaling pathway regulates cell wall integrity and pyomelanin formation. CWI also controls oxidative stress response, gliotoxin production, iron adaptation and asexual development. Finally, CWI is constitutively required for A.fumigatus to cope with the temperature increase found in the mammalian lung environment, during infection. MpkA positively modulates the expression of fumiquinazoline cluster during conidiogenesis and directly phosphorylates fmqC, and perhaps also fmqA. This chain is Mitogen-activated protein kinase mpkA, found in Aspergillus fumigatus (strain ATCC MYA-4609 / CBS 101355 / FGSC A1100 / Af293) (Neosartorya fumigata).